The chain runs to 368 residues: Phospho-N-acetylmuramoyl-pentapeptide-transferase (368 aa).

A run of 10 helical transmembrane segments spans residues 31 to 51 (LTSMLVTFWFGHKIIDFLYGL), 73 to 93 (TMGGLLIIGSLLISVLLWGNL), 98 to 118 (VILLSVFSLSFSVLGFADDYM), 134 to 154 (FILSILISFIFCILFFYYTGT), 175 to 195 (GPVIALGIIAIPFSILVIIGS), 213 to 233 (VLISVMTLGVIAYFSGTPIVA), 249 to 269 (VFLSALTGALFGFLWFNAHPA), 271 to 291 (VFMGDTGSLFLGATLGMIVIL), 296 to 316 (ILLLILGAIFVSEALSVILQV), and 345 to 365 (KIVIRFWIIAVILAIISLSTL).

The protein belongs to the glycosyltransferase 4 family. MraY subfamily. Mg(2+) is required as a cofactor.

The protein localises to the cell inner membrane. The enzyme catalyses UDP-N-acetyl-alpha-D-muramoyl-L-alanyl-gamma-D-glutamyl-meso-2,6-diaminopimeloyl-D-alanyl-D-alanine + di-trans,octa-cis-undecaprenyl phosphate = di-trans,octa-cis-undecaprenyl diphospho-N-acetyl-alpha-D-muramoyl-L-alanyl-D-glutamyl-meso-2,6-diaminopimeloyl-D-alanyl-D-alanine + UMP. It participates in cell wall biogenesis; peptidoglycan biosynthesis. Catalyzes the initial step of the lipid cycle reactions in the biosynthesis of the cell wall peptidoglycan: transfers peptidoglycan precursor phospho-MurNAc-pentapeptide from UDP-MurNAc-pentapeptide onto the lipid carrier undecaprenyl phosphate, yielding undecaprenyl-pyrophosphoryl-MurNAc-pentapeptide, known as lipid I. This is Phospho-N-acetylmuramoyl-pentapeptide-transferase from Leptospira interrogans serogroup Icterohaemorrhagiae serovar copenhageni (strain Fiocruz L1-130).